Consider the following 184-residue polypeptide: Ribosome-recycling factor (184 aa).

It belongs to the RRF family.

Its subcellular location is the cytoplasm. Its function is as follows. Responsible for the release of ribosomes from messenger RNA at the termination of protein biosynthesis. May increase the efficiency of translation by recycling ribosomes from one round of translation to another. The sequence is that of Ribosome-recycling factor from Borrelia turicatae (strain 91E135).